We begin with the raw amino-acid sequence, 453 residues long: MTQQRQMDLAGFFSAGNVTHAHGAWRHTDASNDFLSGKYYQHIARTLERGKFDLLFLPDGLAVEDSYGDNLDTGVGLGGQGAVALEPASVVATMAAVTEHLGLGATISATYYPPYHVARVFATLDQLSGGRVSWNVVTSLNDAEARNFGINQHLEHDARYDRADEFLEAVKKLWNSWDEDALVLDKAAGVFADPAKVHYVDHHGEWLNVRGPLQVPRSPQGEPVILQAGLSPRGRRFAGKWAEAVFSLAPNLEVMQATYQGIKAEVDAAGRDPDQTKIFTAVMPVLGESQAVAQERLEYLNSLVHPEVGLSTLSSHTGINLAAYPLDTPIKDILRDLQDRNVPTQLHMFAAATHSEELTLAEMGRRYGTNVGFVPQWAGTGEQIADELIRHFEGGAADGFIISPAFLPGSYDEFVDQVVPVLQDRGYFRTEYQGNTLRDHLGLRVPQLQGQPS.

FMN is bound by residues Asp59, Thr106, His156, Tyr160, and Ser231.

It belongs to the NtaA/SnaA/DszA monooxygenase family. In terms of assembly, homodimer.

The protein resides in the cytoplasm. The catalysed reaction is dibenzothiophene 5,5-dioxide + FMNH2 + NADH + O2 = 2'-hydroxybiphenyl-2-sulfinate + FMN + NAD(+) + H2O + H(+). It participates in sulfur metabolism; dibenzothiophene degradation. Functionally, catalyzes the second step of the '4S' desulfurization pathway that removes covalently bound sulfur from dibenzothiophene (DBT) without breaking carbon-carbon bonds. Metabolizes DBT-sulfone (DBTO2 or DBT 5,5-dioxide) to 2-(2'-hydroxyphenyl)benzene sulphinate (HBPS). This chain is Dibenzothiophene-sulfone monooxygenase, found in Rhodococcus erythropolis (Arthrobacter picolinophilus).